The sequence spans 410 residues: Putative ankyrin repeat protein FPV240 (410 aa).

ANK repeat units lie at residues 33–62 (NGYS…YPDY), 66–95 (DIES…FIND), 100–129 (KGNT…DTDV), 133–162 (DRFT…CTNI), 166–195 (YGCT…NIDY), and 200–229 (PCVT…DSNI).

This is Putative ankyrin repeat protein FPV240 from Vertebrata (FPV).